Consider the following 614-residue polypeptide: Phosphomethylpyrimidine synthase (614 aa).

Substrate contacts are provided by residues Asn-230, Met-259, Tyr-288, His-324, 344–346 (SRG), 385–388 (DGLR), and Glu-424. Zn(2+) is bound at residue His-428. Substrate is bound at residue Tyr-451. His-492 is a binding site for Zn(2+). Residues Cys-572, Cys-575, and Cys-580 each coordinate [4Fe-4S] cluster.

The protein belongs to the ThiC family. In terms of assembly, homodimer. It depends on [4Fe-4S] cluster as a cofactor.

The enzyme catalyses 5-amino-1-(5-phospho-beta-D-ribosyl)imidazole + S-adenosyl-L-methionine = 4-amino-2-methyl-5-(phosphooxymethyl)pyrimidine + CO + 5'-deoxyadenosine + formate + L-methionine + 3 H(+). The protein operates within cofactor biosynthesis; thiamine diphosphate biosynthesis. Its function is as follows. Catalyzes the synthesis of the hydroxymethylpyrimidine phosphate (HMP-P) moiety of thiamine from aminoimidazole ribotide (AIR) in a radical S-adenosyl-L-methionine (SAM)-dependent reaction. The protein is Phosphomethylpyrimidine synthase of Stenotrophomonas maltophilia (strain K279a).